The following is a 185-amino-acid chain: ADP-ribosylation factor (185 aa).

A lipid anchor (N-myristoyl glycine) is attached at G2. Residues 27 to 34, 70 to 74, and 129 to 132 each bind GTP; these read GLDAAGKT, DVGGQ, and NKQD.

Belongs to the small GTPase superfamily. Arf family.

The protein resides in the golgi apparatus. Functionally, GTP-binding protein involved in protein trafficking; may modulate vesicle budding and uncoating within the Golgi apparatus. This chain is ADP-ribosylation factor, found in Neurospora crassa (strain ATCC 24698 / 74-OR23-1A / CBS 708.71 / DSM 1257 / FGSC 987).